The following is a 487-amino-acid chain: NADH-quinone oxidoreductase subunit N (487 aa).

13 consecutive transmembrane segments (helical) span residues Ile7–Val27, Leu38–Ala58, Tyr79–Leu99, Ile111–Ala131, Phe164–Phe184, Leu207–Phe227, Ala238–Phe258, Val276–Thr296, Leu301–Thr321, Val328–Ala348, Ala373–Phe393, Gly406–Leu426, and Val451–Val471.

This sequence belongs to the complex I subunit 2 family. As to quaternary structure, NDH-1 is composed of 14 different subunits. Subunits NuoA, H, J, K, L, M, N constitute the membrane sector of the complex.

It is found in the cell inner membrane. The enzyme catalyses a quinone + NADH + 5 H(+)(in) = a quinol + NAD(+) + 4 H(+)(out). Functionally, NDH-1 shuttles electrons from NADH, via FMN and iron-sulfur (Fe-S) centers, to quinones in the respiratory chain. The immediate electron acceptor for the enzyme in this species is believed to be ubiquinone. Couples the redox reaction to proton translocation (for every two electrons transferred, four hydrogen ions are translocated across the cytoplasmic membrane), and thus conserves the redox energy in a proton gradient. The polypeptide is NADH-quinone oxidoreductase subunit N (Rhodospirillum rubrum (strain ATCC 11170 / ATH 1.1.1 / DSM 467 / LMG 4362 / NCIMB 8255 / S1)).